Consider the following 385-residue polypeptide: S-adenosylmethionine synthase (385 aa).

ATP is bound at residue His-16. Asp-18 is a binding site for Mg(2+). Glu-44 contacts K(+). L-methionine-binding residues include Glu-57 and Gln-100. The interval 100 to 110 (QSPDINQGVDR) is flexible loop. Residues 164–166 (DGK), 230–231 (KF), Asp-239, 245–246 (RK), Ala-262, and Lys-266 contribute to the ATP site. Asp-239 provides a ligand contact to L-methionine. Residue Lys-270 participates in L-methionine binding.

It belongs to the AdoMet synthase family. In terms of assembly, homotetramer; dimer of dimers. It depends on Mg(2+) as a cofactor. Requires K(+) as cofactor.

Its subcellular location is the cytoplasm. The enzyme catalyses L-methionine + ATP + H2O = S-adenosyl-L-methionine + phosphate + diphosphate. Its pathway is amino-acid biosynthesis; S-adenosyl-L-methionine biosynthesis; S-adenosyl-L-methionine from L-methionine: step 1/1. In terms of biological role, catalyzes the formation of S-adenosylmethionine (AdoMet) from methionine and ATP. The overall synthetic reaction is composed of two sequential steps, AdoMet formation and the subsequent tripolyphosphate hydrolysis which occurs prior to release of AdoMet from the enzyme. The protein is S-adenosylmethionine synthase of Helicobacter acinonychis (strain Sheeba).